We begin with the raw amino-acid sequence, 602 residues long: Elongation factor 4 (602 aa).

The tr-type G domain occupies 6–188 (RNVRNFSIIA…RITEVVPEPA (183 aa)). Residues 18 to 23 (DHGKST) and 135 to 138 (NKID) contribute to the GTP site.

It belongs to the TRAFAC class translation factor GTPase superfamily. Classic translation factor GTPase family. LepA subfamily.

The protein resides in the cell membrane. The catalysed reaction is GTP + H2O = GDP + phosphate + H(+). Required for accurate and efficient protein synthesis under certain stress conditions. May act as a fidelity factor of the translation reaction, by catalyzing a one-codon backward translocation of tRNAs on improperly translocated ribosomes. Back-translocation proceeds from a post-translocation (POST) complex to a pre-translocation (PRE) complex, thus giving elongation factor G a second chance to translocate the tRNAs correctly. Binds to ribosomes in a GTP-dependent manner. The chain is Elongation factor 4 from Oceanobacillus iheyensis (strain DSM 14371 / CIP 107618 / JCM 11309 / KCTC 3954 / HTE831).